A 305-amino-acid chain; its full sequence is uncharacterized protein (305 aa).

This is an uncharacterized protein from Sinorhizobium fredii (strain NBRC 101917 / NGR234).